The chain runs to 469 residues: UDP-N-acetylmuramate--L-alanine ligase (469 aa).

Position 113–119 (113–119) interacts with ATP; it reads GAHGKTT.

This sequence belongs to the MurCDEF family.

The protein localises to the cytoplasm. The enzyme catalyses UDP-N-acetyl-alpha-D-muramate + L-alanine + ATP = UDP-N-acetyl-alpha-D-muramoyl-L-alanine + ADP + phosphate + H(+). Its pathway is cell wall biogenesis; peptidoglycan biosynthesis. In terms of biological role, cell wall formation. In Syntrophobacter fumaroxidans (strain DSM 10017 / MPOB), this protein is UDP-N-acetylmuramate--L-alanine ligase.